A 348-amino-acid chain; its full sequence is Large ribosomal subunit protein uL3m (348 aa).

Residues 1 to 40 (MPGWRLLAQAGARVLGCGARGLGADPGLERRKNILFFVRN) constitute a mitochondrion transit peptide.

Belongs to the universal ribosomal protein uL3 family. In terms of assembly, component of the mitochondrial ribosome large subunit (39S) which comprises a 16S rRNA and about 50 distinct proteins.

Its subcellular location is the mitochondrion. The protein is Large ribosomal subunit protein uL3m (Mrpl3) of Mus musculus (Mouse).